Consider the following 441-residue polypeptide: Serum response factor-binding protein 1 (441 aa).

Coiled coils occupy residues 52 to 77 (KGTEDALLKNQRRAQRLLEEIHAMKE) and 118 to 140 (LLKKKIDVLKDAVQAFKDARQSA). Disordered stretches follow at residues 137–342 (RQSA…RNDK), 357–389 (FHSLAGPKSSRRDPREQAPKNKAPDFPENEPPV), and 406–441 (QTMQAPLHPSWEASRRRKEQQSKIAVFQGKKITFDD). Low complexity predominate over residues 139 to 152 (SAPAAESSESTSGE). The span at 153 to 183 (GRCKDIARSKDDARESQHPERTVVREQKAKD) shows a compositional bias: basic and acidic residues. A Glycyl lysine isopeptide (Lys-Gly) (interchain with G-Cter in SUMO2) cross-link involves residue Lys201. Ser214 is subject to Phosphoserine. Over residues 237-246 (DSNQGKASTK) the composition is skewed to polar residues. Basic and acidic residues predominate over residues 269 to 282 (EKEYFDDSTEERFY). Ser276, Ser291, and Ser293 each carry phosphoserine. A compositionally biased stretch (basic and acidic residues) spans 308–321 (KESGVHSSAKELKP). Residue Lys328 forms a Glycyl lysine isopeptide (Lys-Gly) (interchain with G-Cter in SUMO2) linkage. Positions 366-381 (SRRDPREQAPKNKAPD) are enriched in basic and acidic residues.

Interacts with SRF. Forms complexes with SRF and SRF cofactors ARID2, MYOCD and NKX2-5. Interacts with the N-terminus of SLC2A4. In terms of tissue distribution, highly expressed in heart, skeletal muscle, liver, kidney, testis and brain. Also expressed in white adipose tissue. Expression is up-regulated in cardiomyopathic heart.

Its subcellular location is the cytoplasm. The protein localises to the perinuclear region. In terms of biological role, may be involved in regulating transcriptional activation of cardiac genes during the aging process. May play a role in biosynthesis and/or processing of SLC2A4 in adipose cells. The chain is Serum response factor-binding protein 1 from Mus musculus (Mouse).